A 245-amino-acid polypeptide reads, in one-letter code: Orotidine 5'-phosphate decarboxylase (245 aa).

Substrate-binding positions include Asp-22, Lys-44, 71–80 (DLKFHDIPNT), Thr-131, Arg-192, Gln-201, Gly-221, and Arg-222. Residue Lys-73 is the Proton donor of the active site.

The protein belongs to the OMP decarboxylase family. Type 1 subfamily. As to quaternary structure, homodimer.

The catalysed reaction is orotidine 5'-phosphate + H(+) = UMP + CO2. Its pathway is pyrimidine metabolism; UMP biosynthesis via de novo pathway; UMP from orotate: step 2/2. Catalyzes the decarboxylation of orotidine 5'-monophosphate (OMP) to uridine 5'-monophosphate (UMP). The sequence is that of Orotidine 5'-phosphate decarboxylase from Escherichia coli O127:H6 (strain E2348/69 / EPEC).